The following is a 306-amino-acid chain: Agmatinase (306 aa).

H126, D149, H151, D153, D230, and D232 together coordinate Mn(2+).

The protein belongs to the arginase family. Agmatinase subfamily. Mn(2+) serves as cofactor.

The enzyme catalyses agmatine + H2O = urea + putrescine. The protein operates within amine and polyamine biosynthesis; putrescine biosynthesis via agmatine pathway; putrescine from agmatine: step 1/1. In terms of biological role, catalyzes the formation of putrescine from agmatine. In Escherichia coli O7:K1 (strain IAI39 / ExPEC), this protein is Agmatinase.